The following is a 635-amino-acid chain: Extracellular metalloproteinase MEP (635 aa).

An N-terminal signal peptide occupies residues 1 to 19 (MRYSLSLALLGVAAVTVVA). The propeptide occupies 20-242 (HPHTPGRHGV…VHGVVDYVSH (223 aa)). Residue H428 participates in Zn(2+) binding. Residue E429 is part of the active site. H432 is a Zn(2+) binding site. N473 carries an N-linked (GlcNAc...) asparagine glycan.

The protein belongs to the peptidase M36 family. It depends on Zn(2+) as a cofactor.

It localises to the secreted. In terms of biological role, secreted metalloproteinase that allows assimilation of proteinaceous substrates. The polypeptide is Extracellular metalloproteinase MEP (MEP) (Pyricularia oryzae (strain 70-15 / ATCC MYA-4617 / FGSC 8958) (Rice blast fungus)).